Reading from the N-terminus, the 209-residue chain is ATP phosphoribosyltransferase (209 aa).

Belongs to the ATP phosphoribosyltransferase family. Short subfamily. In terms of assembly, heteromultimer composed of HisG and HisZ subunits.

Its subcellular location is the cytoplasm. The enzyme catalyses 1-(5-phospho-beta-D-ribosyl)-ATP + diphosphate = 5-phospho-alpha-D-ribose 1-diphosphate + ATP. Its pathway is amino-acid biosynthesis; L-histidine biosynthesis; L-histidine from 5-phospho-alpha-D-ribose 1-diphosphate: step 1/9. Catalyzes the condensation of ATP and 5-phosphoribose 1-diphosphate to form N'-(5'-phosphoribosyl)-ATP (PR-ATP). Has a crucial role in the pathway because the rate of histidine biosynthesis seems to be controlled primarily by regulation of HisG enzymatic activity. This Alkaliphilus metalliredigens (strain QYMF) protein is ATP phosphoribosyltransferase.